The chain runs to 487 residues: Glutamyl-tRNA(Gln) amidotransferase subunit A (487 aa).

Residues Lys80 and Ser155 each act as charge relay system in the active site. Ser179 acts as the Acyl-ester intermediate in catalysis.

Belongs to the amidase family. GatA subfamily. In terms of assembly, heterotrimer of A, B and C subunits.

The enzyme catalyses L-glutamyl-tRNA(Gln) + L-glutamine + ATP + H2O = L-glutaminyl-tRNA(Gln) + L-glutamate + ADP + phosphate + H(+). In terms of biological role, allows the formation of correctly charged Gln-tRNA(Gln) through the transamidation of misacylated Glu-tRNA(Gln) in organisms which lack glutaminyl-tRNA synthetase. The reaction takes place in the presence of glutamine and ATP through an activated gamma-phospho-Glu-tRNA(Gln). The sequence is that of Glutamyl-tRNA(Gln) amidotransferase subunit A from Chloroflexus aurantiacus (strain ATCC 29366 / DSM 635 / J-10-fl).